We begin with the raw amino-acid sequence, 767 residues long: ATPase family gene 2 protein homolog B (767 aa).

Met-1 bears the N-acetylmethionine mark. Residues 241-248 and 507-514 each bind ATP; these read GPPGVGKT and GPPGCAKT.

This sequence belongs to the AAA ATPase family. AFG2 subfamily. In terms of assembly, part of the 55LCC heterohexameric ATPase complex composed at least of AIRIM, AFG2A, AFG2B and CINP. Associates with pre-60S ribosomal particles.

It localises to the cytoplasm. The protein resides in the cytoskeleton. Its subcellular location is the spindle. The protein localises to the nucleus. The catalysed reaction is ATP + H2O = ADP + phosphate + H(+). With respect to regulation, in the context of 55LCC heterohexameric ATPase complex, the ATPase activity is stimulated by DNA binding and inhibited in presence of RNA. ATP-dependent chaperone part of the 55LCC heterohexameric ATPase complex which is chromatin-associated and promotes replisome proteostasis to maintain replication fork progression and genome stability. Required for replication fork progression, sister chromatid cohesion, and chromosome stability. The ATPase activity is specifically enhanced by replication fork DNA and is coupled to cysteine protease-dependent cleavage of replisome substrates in response to replication fork damage. Uses ATPase activity to process replisome substrates in S-phase, facilitating their proteolytic turnover from chromatin to ensure DNA replication and mitotic fidelity. Plays an essential role in the cytoplasmic maturation steps of pre-60S ribosomal particles by promoting the release of shuttling protein RSL24D1/RLP24 from the pre-ribosomal particles. The sequence is that of ATPase family gene 2 protein homolog B (AFG2B) from Bos taurus (Bovine).